Here is a 177-residue protein sequence, read N- to C-terminus: Large ribosomal subunit protein uL6 (177 aa).

It belongs to the universal ribosomal protein uL6 family. As to quaternary structure, part of the 50S ribosomal subunit.

Functionally, this protein binds to the 23S rRNA, and is important in its secondary structure. It is located near the subunit interface in the base of the L7/L12 stalk, and near the tRNA binding site of the peptidyltransferase center. This is Large ribosomal subunit protein uL6 from Ectopseudomonas mendocina (strain ymp) (Pseudomonas mendocina).